The sequence spans 405 residues: Tryptophan synthase beta chain (405 aa).

Lys98 is subject to N6-(pyridoxal phosphate)lysine.

This sequence belongs to the TrpB family. In terms of assembly, tetramer of two alpha and two beta chains. The cofactor is pyridoxal 5'-phosphate.

The enzyme catalyses (1S,2R)-1-C-(indol-3-yl)glycerol 3-phosphate + L-serine = D-glyceraldehyde 3-phosphate + L-tryptophan + H2O. The protein operates within amino-acid biosynthesis; L-tryptophan biosynthesis; L-tryptophan from chorismate: step 5/5. Its function is as follows. The beta subunit is responsible for the synthesis of L-tryptophan from indole and L-serine. The polypeptide is Tryptophan synthase beta chain (Xylella fastidiosa (strain M12)).